We begin with the raw amino-acid sequence, 115 residues long: NADH-ubiquinone oxidoreductase chain 3 (115 aa).

A run of 3 helical transmembrane segments spans residues Leu-3–Trp-23, Phe-55–Leu-75, and Val-87–Ile-107.

The protein belongs to the complex I subunit 3 family. In terms of assembly, core subunit of respiratory chain NADH dehydrogenase (Complex I) which is composed of 45 different subunits. Interacts with TMEM186. Interacts with TMEM242.

It localises to the mitochondrion inner membrane. It catalyses the reaction a ubiquinone + NADH + 5 H(+)(in) = a ubiquinol + NAD(+) + 4 H(+)(out). Functionally, core subunit of the mitochondrial membrane respiratory chain NADH dehydrogenase (Complex I) which catalyzes electron transfer from NADH through the respiratory chain, using ubiquinone as an electron acceptor. Essential for the catalytic activity of complex I. The protein is NADH-ubiquinone oxidoreductase chain 3 of Dugong dugon (Dugong).